Here is a 446-residue protein sequence, read N- to C-terminus: Phosphoglucosamine mutase (446 aa).

The active-site Phosphoserine intermediate is Ser101. Positions 101, 240, 242, and 244 each coordinate Mg(2+). At Ser101 the chain carries Phosphoserine.

The protein belongs to the phosphohexose mutase family. The cofactor is Mg(2+). Post-translationally, activated by phosphorylation.

It carries out the reaction alpha-D-glucosamine 1-phosphate = D-glucosamine 6-phosphate. Functionally, catalyzes the conversion of glucosamine-6-phosphate to glucosamine-1-phosphate. The protein is Phosphoglucosamine mutase of Pseudomonas putida (strain ATCC 47054 / DSM 6125 / CFBP 8728 / NCIMB 11950 / KT2440).